The primary structure comprises 434 residues: Guanosine-inosine kinase (434 aa).

Residues 40 to 45, 93 to 97, and arginine 198 contribute to the GMP site; these read DQTLVD and GTIGN. Residues 284–289, glycine 357, and asparagine 402 contribute to the ATP site; that span reads TAGPIG.

It belongs to the carbohydrate kinase PfkB family. The cofactor is Mg(2+).

It catalyses the reaction guanosine + ATP = GMP + ADP + H(+). The catalysed reaction is inosine + ATP = IMP + ADP + H(+). It functions in the pathway purine metabolism; IMP biosynthesis via salvage pathway; IMP from inosine: step 1/1. Its pathway is purine metabolism; GMP biosynthesis via salvage pathway. In terms of biological role, catalyzes the phosphorylation of guanosine and inosine to GMP and IMP, respectively. In Escherichia coli O157:H7, this protein is Guanosine-inosine kinase.